Here is a 72-residue protein sequence, read N- to C-terminus: Conotoxin TxMMSK-04 (72 aa).

The N-terminal stretch at 1–20 (MMSKLGVLLTICLLLFPLTA) is a signal peptide. A propeptide spanning residues 21–51 (VPLDGDQPADRPAERMQDGISSEHHPFFDSV) is cleaved from the precursor. The residue at position 55 (Gln-55) is a Pyrrolidone carboxylic acid. Disulfide bonds link Cys-57–Cys-71, Cys-58–Cys-67, and Cys-63–Cys-70. The residue at position 69 (Pro-69) is a 4-hydroxyproline. A Cysteine amide modification is found at Cys-71.

It belongs to the conotoxin M superfamily. As to expression, expressed by the venom duct.

Its subcellular location is the secreted. This chain is Conotoxin TxMMSK-04, found in Conus textile (Cloth-of-gold cone).